The chain runs to 210 residues: ATP-dependent Clp protease proteolytic subunit (210 aa).

S111 (nucleophile) is an active-site residue. H136 is an active-site residue.

The protein belongs to the peptidase S14 family. Fourteen ClpP subunits assemble into 2 heptameric rings which stack back to back to give a disk-like structure with a central cavity, resembling the structure of eukaryotic proteasomes.

It localises to the cytoplasm. It catalyses the reaction Hydrolysis of proteins to small peptides in the presence of ATP and magnesium. alpha-casein is the usual test substrate. In the absence of ATP, only oligopeptides shorter than five residues are hydrolyzed (such as succinyl-Leu-Tyr-|-NHMec, and Leu-Tyr-Leu-|-Tyr-Trp, in which cleavage of the -Tyr-|-Leu- and -Tyr-|-Trp bonds also occurs).. Cleaves peptides in various proteins in a process that requires ATP hydrolysis. Has a chymotrypsin-like activity. Plays a major role in the degradation of misfolded proteins. In Halorhodospira halophila (strain DSM 244 / SL1) (Ectothiorhodospira halophila (strain DSM 244 / SL1)), this protein is ATP-dependent Clp protease proteolytic subunit.